We begin with the raw amino-acid sequence, 92 residues long: Acylphosphatase (92 aa).

The Acylphosphatase-like domain occupies 5–92 (GVTIYVYGRV…EDIADFIVRH (88 aa)). Residues arginine 20 and asparagine 38 contribute to the active site.

The protein belongs to the acylphosphatase family.

The enzyme catalyses an acyl phosphate + H2O = a carboxylate + phosphate + H(+). This is Acylphosphatase (acyP) from Photorhabdus laumondii subsp. laumondii (strain DSM 15139 / CIP 105565 / TT01) (Photorhabdus luminescens subsp. laumondii).